A 508-amino-acid polypeptide reads, in one-letter code: Gasdermin-C (508 aa).

Positions 1-257 (MPSMLERISK…VGYCAARSEG (257 aa)) are triggers pyroptosis.

This sequence belongs to the gasdermin family. In terms of assembly, homooligomer; homooligomeric ring-shaped pore complex containing 27-28 subunits when inserted in the membrane. In terms of processing, cleavage by CASP8 relieves autoinhibition by releasing the N-terminal moiety (Gasdermin-C, N-terminal) that initiates pyroptosis. The cleavage site is unclear. According to a publication, it takes place after Asp-240 in response to alpha-ketoglutarate. Another paper reports cleavage by CASP8 after Asp-365. Post-translationally, palmitoylated. In terms of tissue distribution, expressed mainly in trachea and spleen. In the esophagus, expressed in differentiating cells and probably in differentiated cells. Also detected in gastric epithelium.

The protein resides in the cytoplasm. Its subcellular location is the cytosol. The protein localises to the cell membrane. With respect to regulation, the full-length protein before cleavage is inactive: intramolecular interactions between N- and C-terminal domains mediate autoinhibition in the absence of activation signal. The intrinsic pyroptosis-inducing activity is carried by the released N-terminal moiety (Gasdermin-C, N-terminal) following cleavage by caspase CASP8. Functionally, this form constitutes the precursor of the pore-forming protein: upon cleavage, the released N-terminal moiety (Gasdermin-C, N-terminal) binds to membranes and forms pores, triggering pyroptosis. Pore-forming protein that causes membrane permeabilization and pyroptosis. Produced by the cleavage of gasdermin-C by caspase CASP8 in response to death signals. After cleavage, moves to the plasma membrane where it strongly binds to membrane inner leaflet lipids. Homooligomerizes within the membrane and forms pores of 10-15 nanometers (nm) of inner diameter, triggering pyroptosis. In Homo sapiens (Human), this protein is Gasdermin-C.